The sequence spans 212 residues: Protein-L-isoaspartate O-methyltransferase (212 aa).

The active site involves S56.

It belongs to the methyltransferase superfamily. L-isoaspartyl/D-aspartyl protein methyltransferase family.

The protein localises to the cytoplasm. It carries out the reaction [protein]-L-isoaspartate + S-adenosyl-L-methionine = [protein]-L-isoaspartate alpha-methyl ester + S-adenosyl-L-homocysteine. Functionally, catalyzes the methyl esterification of L-isoaspartyl residues in peptides and proteins that result from spontaneous decomposition of normal L-aspartyl and L-asparaginyl residues. It plays a role in the repair and/or degradation of damaged proteins. This Myxococcus xanthus (strain DK1622) protein is Protein-L-isoaspartate O-methyltransferase.